The chain runs to 257 residues: tRNA pseudouridine synthase A (257 aa).

The Nucleophile role is filled by aspartate 53. Tyrosine 111 lines the substrate pocket.

This sequence belongs to the tRNA pseudouridine synthase TruA family. Homodimer.

The enzyme catalyses uridine(38/39/40) in tRNA = pseudouridine(38/39/40) in tRNA. Formation of pseudouridine at positions 38, 39 and 40 in the anticodon stem and loop of transfer RNAs. The polypeptide is tRNA pseudouridine synthase A (Xanthomonas oryzae pv. oryzae (strain MAFF 311018)).